A 134-amino-acid chain; its full sequence is Small ribosomal subunit protein uS8 (134 aa).

It belongs to the universal ribosomal protein uS8 family. As to quaternary structure, part of the 30S ribosomal subunit. Contacts proteins S5 and S12.

Functionally, one of the primary rRNA binding proteins, it binds directly to 16S rRNA central domain where it helps coordinate assembly of the platform of the 30S subunit. The protein is Small ribosomal subunit protein uS8 of Sphingopyxis alaskensis (strain DSM 13593 / LMG 18877 / RB2256) (Sphingomonas alaskensis).